We begin with the raw amino-acid sequence, 186 residues long: Small ribosomal subunit protein eS7 (186 aa).

It belongs to the eukaryotic ribosomal protein eS7 family. As to quaternary structure, component of the small ribosomal subunit. Mature ribosomes consist of a small (40S) and a large (60S) subunit. The 40S subunit contains about 32 different proteins and 1 molecule of RNA (18S). The 60S subunit contains 45 different proteins and 3 molecules of RNA (25S, 5.8S and 5S).

It localises to the cytoplasm. In terms of biological role, component of the ribosome, a large ribonucleoprotein complex responsible for the synthesis of proteins in the cell. The small ribosomal subunit (SSU) binds messenger RNAs (mRNAs) and translates the encoded message by selecting cognate aminoacyl-transfer RNA (tRNA) molecules. The large subunit (LSU) contains the ribosomal catalytic site termed the peptidyl transferase center (PTC), which catalyzes the formation of peptide bonds, thereby polymerizing the amino acids delivered by tRNAs into a polypeptide chain. The nascent polypeptides leave the ribosome through a tunnel in the LSU and interact with protein factors that function in enzymatic processing, targeting, and the membrane insertion of nascent chains at the exit of the ribosomal tunnel. RPS7A is involved in nucleolar processing of pre-18S ribosomal RNA and ribosome assembly. In Candida albicans (strain SC5314 / ATCC MYA-2876) (Yeast), this protein is Small ribosomal subunit protein eS7 (RPS7A).